A 219-amino-acid chain; its full sequence is Elongation factor Ts, chloroplastic (219 aa).

It belongs to the EF-Ts family.

The protein localises to the plastid. The protein resides in the chloroplast. Associates with the EF-Tu.GDP complex and induces the exchange of GDP to GTP. It remains bound to the aminoacyl-tRNA.EF-Tu.GTP complex up to the GTP hydrolysis stage on the ribosome. The chain is Elongation factor Ts, chloroplastic (tsf) from Guillardia theta (Cryptophyte).